We begin with the raw amino-acid sequence, 266 residues long: Putative pyruvate, phosphate dikinase regulatory protein (266 aa).

147–154 (GLSRTSKT) contacts ADP.

The protein belongs to the pyruvate, phosphate/water dikinase regulatory protein family. PDRP subfamily.

The catalysed reaction is N(tele)-phospho-L-histidyl/L-threonyl-[pyruvate, phosphate dikinase] + ADP = N(tele)-phospho-L-histidyl/O-phospho-L-threonyl-[pyruvate, phosphate dikinase] + AMP + H(+). The enzyme catalyses N(tele)-phospho-L-histidyl/O-phospho-L-threonyl-[pyruvate, phosphate dikinase] + phosphate + H(+) = N(tele)-phospho-L-histidyl/L-threonyl-[pyruvate, phosphate dikinase] + diphosphate. Its function is as follows. Bifunctional serine/threonine kinase and phosphorylase involved in the regulation of the pyruvate, phosphate dikinase (PPDK) by catalyzing its phosphorylation/dephosphorylation. The polypeptide is Putative pyruvate, phosphate dikinase regulatory protein (Clostridium perfringens (strain 13 / Type A)).